Here is a 157-residue protein sequence, read N- to C-terminus: ATP synthase subunit b' (157 aa).

Residues 22-42 (ATLPLIAIQFLLLVAVLNSLF) traverse the membrane as a helical segment.

This sequence belongs to the ATPase B chain family. In terms of assembly, F-type ATPases have 2 components, F(1) - the catalytic core - and F(0) - the membrane proton channel. F(1) has five subunits: alpha(3), beta(3), gamma(1), delta(1), epsilon(1). F(0) has four main subunits: a(1), b(1), b'(1) and c(10-14). The alpha and beta chains form an alternating ring which encloses part of the gamma chain. F(1) is attached to F(0) by a central stalk formed by the gamma and epsilon chains, while a peripheral stalk is formed by the delta, b and b' chains.

It localises to the cellular thylakoid membrane. Functionally, f(1)F(0) ATP synthase produces ATP from ADP in the presence of a proton or sodium gradient. F-type ATPases consist of two structural domains, F(1) containing the extramembraneous catalytic core and F(0) containing the membrane proton channel, linked together by a central stalk and a peripheral stalk. During catalysis, ATP synthesis in the catalytic domain of F(1) is coupled via a rotary mechanism of the central stalk subunits to proton translocation. Its function is as follows. Component of the F(0) channel, it forms part of the peripheral stalk, linking F(1) to F(0). The b'-subunit is a diverged and duplicated form of b found in plants and photosynthetic bacteria. The chain is ATP synthase subunit b' from Synechococcus sp. (strain JA-2-3B'a(2-13)) (Cyanobacteria bacterium Yellowstone B-Prime).